The primary structure comprises 147 residues: Large ribosomal subunit protein uL16 (147 aa).

The protein belongs to the universal ribosomal protein uL16 family. In terms of assembly, part of the 50S ribosomal subunit.

Binds 23S rRNA and is also seen to make contacts with the A and possibly P site tRNAs. The protein is Large ribosomal subunit protein uL16 of Lactobacillus delbrueckii subsp. bulgaricus (strain ATCC 11842 / DSM 20081 / BCRC 10696 / JCM 1002 / NBRC 13953 / NCIMB 11778 / NCTC 12712 / WDCM 00102 / Lb 14).